A 455-amino-acid polypeptide reads, in one-letter code: Chromosomal replication initiator protein DnaA 2 (455 aa).

The domain I, interacts with DnaA modulators stretch occupies residues 1-95 (MLTCNDCSTW…KRSSPQIAAS (95 aa)). Residues 96 to 112 (VTKPAVEVSEENKDFQL) are domain II. The interval 113–328 (KLNGAYRFDN…GAINKLTAYC (216 aa)) is domain III, AAA+ region. Residues glycine 157, glycine 159, lysine 160, and threonine 161 each contribute to the ATP site. Positions 329-455 (LLFNKPLTET…IAIDSPQHFV (127 aa)) are domain IV, binds dsDNA.

The protein belongs to the DnaA family. Oligomerizes as a right-handed, spiral filament on DNA at oriC.

The protein localises to the cytoplasm. Functionally, plays an essential role in the initiation and regulation of chromosomal replication. ATP-DnaA binds to the origin of replication (oriC) to initiate formation of the DNA replication initiation complex once per cell cycle. Binds the DnaA box (a 9 base pair repeat at the origin) and separates the double-stranded (ds)DNA. Forms a right-handed helical filament on oriC DNA; dsDNA binds to the exterior of the filament while single-stranded (ss)DNA is stabiized in the filament's interior. The ATP-DnaA-oriC complex binds and stabilizes one strand of the AT-rich DNA unwinding element (DUE), permitting loading of DNA polymerase. After initiation quickly degrades to an ADP-DnaA complex that is not apt for DNA replication. Binds acidic phospholipids. The polypeptide is Chromosomal replication initiator protein DnaA 2 (Chlamydia muridarum (strain MoPn / Nigg)).